The following is a 49-amino-acid chain: Large ribosomal subunit protein bL33 (49 aa).

This sequence belongs to the bacterial ribosomal protein bL33 family.

The chain is Large ribosomal subunit protein bL33 from Finegoldia magna (strain ATCC 29328 / DSM 20472 / WAL 2508) (Peptostreptococcus magnus).